A 108-amino-acid polypeptide reads, in one-letter code: Translation initiation factor 1A (108 aa).

The region spanning 10-84 (IRVITPNKKS…EKGDIIYRYT (75 aa)) is the S1-like domain.

The protein belongs to the eIF-1A family.

Seems to be required for maximal rate of protein biosynthesis. Enhances ribosome dissociation into subunits and stabilizes the binding of the initiator Met-tRNA(I) to 40 S ribosomal subunits. This Picrophilus torridus (strain ATCC 700027 / DSM 9790 / JCM 10055 / NBRC 100828 / KAW 2/3) protein is Translation initiation factor 1A.